Reading from the N-terminus, the 149-residue chain is Large ribosomal subunit protein bL9 (149 aa).

This sequence belongs to the bacterial ribosomal protein bL9 family.

In terms of biological role, binds to the 23S rRNA. The polypeptide is Large ribosomal subunit protein bL9 (Glaesserella parasuis serovar 5 (strain SH0165) (Haemophilus parasuis)).